Here is a 155-residue protein sequence, read N- to C-terminus: V-type proton ATPase 16 kDa proteolipid subunit c (155 aa).

The Lumenal portion of the chain corresponds to 1–10; sequence MSEAKSGPEY. A helical membrane pass occupies residues 11–33; the sequence is ASFFAVMGASAAMVFSALGAAYG. Over 34–55 the chain is Cytoplasmic; the sequence is TAKSGTGIAAMSVMRPEMIMKS. Residues 56-76 traverse the membrane as a helical segment; sequence IIPVVMAGIIAIYGLVVAVLI. Topologically, residues 77–92 are lumenal; the sequence is ANSLNDGISLYRSFLQ. Residues 93 to 114 traverse the membrane as a helical segment; that stretch reads LGAGLSVGLSGLAAGFAIGIVG. Residues 115-131 lie on the Cytoplasmic side of the membrane; the sequence is DAGVRGTAQQPRLFVGM. The chain crosses the membrane as a helical span at residues 132–152; the sequence is ILILIFAEVLGLYGLIVALIL. Topologically, residues 153-155 are lumenal; it reads STK.

It belongs to the V-ATPase proteolipid subunit family. V-ATPase is a heteromultimeric enzyme made up of two complexes: the ATP-hydrolytic V1 complex and the proton translocation V0 complex. The V1 complex consists of three catalytic AB heterodimers that form a heterohexamer, three peripheral stalks each consisting of EG heterodimers, one central rotor including subunits D and F, and the regulatory subunits C and H. The proton translocation complex V0 consists of the proton transport subunit a, a ring of proteolipid subunits c9c'', rotary subunit d, subunits e and f, and the accessory subunits ATP6AP1/Ac45 and ATP6AP2/PRR. Interacts with the V0 complex V-ATPase subunit a4 ATP6V0A4. Interacts with LASS2. Interacts with RNF182; this interaction leads to ubiquitination and degradation via the proteasome pathway. Post-translationally, ubiquitinated by RNF182, leading to its degradation via the ubiquitin-proteasome pathway.

The protein localises to the cytoplasmic vesicle. It is found in the clathrin-coated vesicle membrane. Its subcellular location is the secretory vesicle. It localises to the synaptic vesicle membrane. Functionally, proton-conducting pore forming subunit of the V0 complex of vacuolar(H+)-ATPase (V-ATPase), a multisubunit enzyme composed of a peripheral complex (V1) that hydrolyzes ATP and a membrane integral complex (V0) that translocates protons. V-ATPase is responsible for acidifying and maintaining the pH of intracellular compartments and in some cell types, is targeted to the plasma membrane, where it is responsible for acidifying the extracellular environment. The polypeptide is V-type proton ATPase 16 kDa proteolipid subunit c (ATP6V0C) (Ovis aries (Sheep)).